The primary structure comprises 804 residues: G-type lectin S-receptor-like serine/threonine-protein kinase LECRK4 (804 aa).

The N-terminal stretch at 1–23 (MAPPLFLLSLQLLVLLSSPSAQA) is a signal peptide. One can recognise a Bulb-type lectin domain in the interval 24 to 150 (QNISLGTSLT…GGSTISWETF (127 aa)). The Extracellular segment spans residues 24-458 (QNISLGTSLT…DKKLWILGSS (435 aa)). Residues N25, N58, N216, N227, N238, and N243 are each glycosylated (N-linked (GlcNAc...) asparagine). Positions 290 to 341 (PENICNAQTKVGSGTCGFNSYCMFDGSNNQTSCVCPEQYSFFDEVRKYRGCR) constitute an EGF-like; atypical domain. Intrachain disulfides connect C294/C311, C305/C322, C324/C340, C386/C406, and C390/C396. Residue N318 is glycosylated (N-linked (GlcNAc...) asparagine). A PAN domain is found at 349-426 (CDLDEAASMA…IMGSGVQRTV (78 aa)). N-linked (GlcNAc...) asparagine glycosylation is present at N434. The helical transmembrane segment at 459 to 479 (LLLGGSVIANFALSSVLLFGT) threads the bilayer. The Cytoplasmic portion of the chain corresponds to 480–804 (YCTITRKDVQ…DSSSVVNSFP (325 aa)). In terms of domain architecture, Protein kinase spans 514-790 (DGFKEVLGTG…TQMLDGADAI (277 aa)). Residues 520–528 (LGTGASGIV) and K544 contribute to the ATP site. The active-site Proton acceptor is the D638.

It belongs to the protein kinase superfamily. Ser/Thr protein kinase family.

The protein localises to the membrane. It catalyses the reaction L-seryl-[protein] + ATP = O-phospho-L-seryl-[protein] + ADP + H(+). The enzyme catalyses L-threonyl-[protein] + ATP = O-phospho-L-threonyl-[protein] + ADP + H(+). Its function is as follows. Does not seem to be involved in resistance against the herbivorous insect brown planthopper (N.lugens, BPH). This Oryza sativa subsp. indica (Rice) protein is G-type lectin S-receptor-like serine/threonine-protein kinase LECRK4.